A 132-amino-acid polypeptide reads, in one-letter code: Sec-independent protein translocase protein TatB (132 aa).

The helical transmembrane segment at 1-21 (MFDIGFWELVLISVVGLVVLG) threads the bilayer. Residues 70–132 (GMEDLSPELK…KVSAADKKAE (63 aa)) form a disordered region. Composition is skewed to basic and acidic residues over residues 96–108 (YADK…ETAK) and 115–132 (SAEK…KKAE).

Belongs to the TatB family. The Tat system comprises two distinct complexes: a TatABC complex, containing multiple copies of TatA, TatB and TatC subunits, and a separate TatA complex, containing only TatA subunits. Substrates initially bind to the TatABC complex, which probably triggers association of the separate TatA complex to form the active translocon.

The protein localises to the cell inner membrane. Functionally, part of the twin-arginine translocation (Tat) system that transports large folded proteins containing a characteristic twin-arginine motif in their signal peptide across membranes. Together with TatC, TatB is part of a receptor directly interacting with Tat signal peptides. TatB may form an oligomeric binding site that transiently accommodates folded Tat precursor proteins before their translocation. This is Sec-independent protein translocase protein TatB from Vibrio parahaemolyticus serotype O3:K6 (strain RIMD 2210633).